The chain runs to 394 residues: Probable peptidoglycan glycosyltransferase FtsW (394 aa).

Over 1–27 (MEFLQNIKKNYDEWTRITPQGLLYDRA) the chain is Cytoplasmic. The helical transmembrane segment at 28–48 (LFWLFVILLLIGLVAVTSASI) threads the bilayer. Topologically, residues 49 to 66 (PYSSRLFNDPFYFAKRDA) are periplasmic. The helical transmembrane segment at 67–87 (IYVLLSLLTCYISLQISSSQW) threads the bilayer. Over 88–93 (EKWHAK) the chain is Cytoplasmic. The chain crosses the membrane as a helical span at residues 94–114 (IFLFSVILLLLVPFIGTSVNG). At 115-120 (AKRWIS) the chain is on the periplasmic side. A helical transmembrane segment spans residues 121 to 141 (LGILNFQPAEFAKLALTCFLA). Topologically, residues 142–155 (SYFTRRYDEVRSRH) are cytoplasmic. 2 consecutive transmembrane segments (helical) span residues 156–176 (VSIFKPFIVMLVLGCFLLLQP) and 177–197 (DLGSTVVLFIIMSGMLFIVGA). Position 198 (K198) is a topological domain, cytoplasmic. The helical transmembrane segment at 199 to 219 (ILQFVGLIALGGILFVWLVLT) threads the bilayer. The Periplasmic segment spans residues 220–277 (ASYRLKRFIGFLEPFKEPYGTGFQLTNSLIAFGRGEITGEGLGNSIQKLDYLPEAHTD). The helical transmembrane segment at 278–298 (FIMAIIGEEFGFIGILIVILL) threads the bilayer. The Cytoplasmic segment spans residues 299–322 (LGLLIFRAMKIGRESLMLEQRFRG). The helical transmembrane segment at 323–343 (FFALGIGFWIFFQGFVNLGMA) threads the bilayer. The Periplasmic portion of the chain corresponds to 344 to 353 (LGMLPTKGLT). A helical membrane pass occupies residues 354-374 (FPLVSYGGSSIIIMSATIGIL). Over 375-394 (LRIDHENRLFRIGQARLRDD) the chain is Cytoplasmic.

Belongs to the SEDS family. FtsW subfamily.

The protein localises to the cell inner membrane. The enzyme catalyses [GlcNAc-(1-&gt;4)-Mur2Ac(oyl-L-Ala-gamma-D-Glu-L-Lys-D-Ala-D-Ala)](n)-di-trans,octa-cis-undecaprenyl diphosphate + beta-D-GlcNAc-(1-&gt;4)-Mur2Ac(oyl-L-Ala-gamma-D-Glu-L-Lys-D-Ala-D-Ala)-di-trans,octa-cis-undecaprenyl diphosphate = [GlcNAc-(1-&gt;4)-Mur2Ac(oyl-L-Ala-gamma-D-Glu-L-Lys-D-Ala-D-Ala)](n+1)-di-trans,octa-cis-undecaprenyl diphosphate + di-trans,octa-cis-undecaprenyl diphosphate + H(+). It participates in cell wall biogenesis; peptidoglycan biosynthesis. Peptidoglycan polymerase that is essential for cell division. This is Probable peptidoglycan glycosyltransferase FtsW from Haemophilus influenzae (strain ATCC 51907 / DSM 11121 / KW20 / Rd).